Here is a 253-residue protein sequence, read N- to C-terminus: Small ribosomal subunit protein uS2 (253 aa).

The protein belongs to the universal ribosomal protein uS2 family.

This is Small ribosomal subunit protein uS2 from Cereibacter sphaeroides (strain ATCC 17023 / DSM 158 / JCM 6121 / CCUG 31486 / LMG 2827 / NBRC 12203 / NCIMB 8253 / ATH 2.4.1.) (Rhodobacter sphaeroides).